A 356-amino-acid chain; its full sequence is Protein RecA (356 aa).

Residue 68 to 75 (GQESSGKT) participates in ATP binding.

It belongs to the RecA family.

The protein localises to the cytoplasm. Can catalyze the hydrolysis of ATP in the presence of single-stranded DNA, the ATP-dependent uptake of single-stranded DNA by duplex DNA, and the ATP-dependent hybridization of homologous single-stranded DNAs. It interacts with LexA causing its activation and leading to its autocatalytic cleavage. In Thermotoga petrophila (strain ATCC BAA-488 / DSM 13995 / JCM 10881 / RKU-1), this protein is Protein RecA.